Reading from the N-terminus, the 445-residue chain is Argininosuccinate synthase (445 aa).

ATP contacts are provided by residues 17 to 25 (AFSGGLDTS) and A43. Residue Y99 coordinates L-citrulline. Residues G129 and T131 each coordinate ATP. The L-aspartate site is built by T131, N135, and D136. N135 provides a ligand contact to L-citrulline. D136 serves as a coordination point for ATP. L-citrulline contacts are provided by R139 and S192. Residue D194 participates in ATP binding. Positions 201, 203, and 280 each coordinate L-citrulline.

It belongs to the argininosuccinate synthase family. Type 2 subfamily. Homotetramer.

The protein resides in the cytoplasm. The catalysed reaction is L-citrulline + L-aspartate + ATP = 2-(N(omega)-L-arginino)succinate + AMP + diphosphate + H(+). It participates in amino-acid biosynthesis; L-arginine biosynthesis; L-arginine from L-ornithine and carbamoyl phosphate: step 2/3. The chain is Argininosuccinate synthase from Gemmatimonas aurantiaca (strain DSM 14586 / JCM 11422 / NBRC 100505 / T-27).